Reading from the N-terminus, the 499-residue chain is Thioredoxin reductase 1, cytoplasmic (499 aa).

Residues 22–23 (SG), 42–43 (DF), 58–59 (TC), and 63–67 (GCIPK) contribute to the FAD site. The cysteines at positions 59 and 64 are disulfide-linked. Lys68 bears the N6-succinyllysine mark. Position 131 is a phosphotyrosine (Tyr131). FAD contacts are provided by residues 131–132 (YG) and Thr161. NADP(+) contacts are provided by residues Arg166, 198 to 204 (ASYVALE), 221 to 222 (RS), Arg226, 226 to 228 (RGF), 292 to 293 (GR), and Lys315. FAD is bound at residue Tyr200. FAD is bound by residues Asp334, 341-343 (ELT), and His472. Residue Glu341 participates in NADP(+) binding. His472 (proton acceptor) is an active-site residue. A cross-link (cysteinyl-selenocysteine (Cys-Sec)) is located at residues 497-498 (CU). Position 498 (Sec498) is a non-standard amino acid, selenocysteine.

This sequence belongs to the class-I pyridine nucleotide-disulfide oxidoreductase family. Homodimer. The cofactor is FAD. Post-translationally, ISGylated.

It is found in the cytoplasm. The enzyme catalyses [thioredoxin]-dithiol + NADP(+) = [thioredoxin]-disulfide + NADPH + H(+). It carries out the reaction H2O2 + NADPH + H(+) = NADP(+) + 2 H2O. Reduces disulfideprotein thioredoxin (Trx) to its dithiol-containing form. Homodimeric flavoprotein involved in the regulation of cellular redox reactions, growth and differentiation. Contains a selenocysteine residue at the C-terminal active site that is essential for catalysis. Also has reductase activity on hydrogen peroxide (H2O2). This Bos taurus (Bovine) protein is Thioredoxin reductase 1, cytoplasmic (TXNRD1).